Consider the following 286-residue polypeptide: Homoserine kinase (286 aa).

78 to 88 contributes to the ATP binding site; sequence PLARGLGSSSS.

It belongs to the GHMP kinase family. Homoserine kinase subfamily.

Its subcellular location is the cytoplasm. The enzyme catalyses L-homoserine + ATP = O-phospho-L-homoserine + ADP + H(+). The protein operates within amino-acid biosynthesis; L-threonine biosynthesis; L-threonine from L-aspartate: step 4/5. Catalyzes the ATP-dependent phosphorylation of L-homoserine to L-homoserine phosphate. The polypeptide is Homoserine kinase (Streptococcus thermophilus (strain CNRZ 1066)).